A 312-amino-acid chain; its full sequence is Ubiquinone biosynthesis O-methyltransferase, mitochondrial (312 aa).

The N-terminal 32 residues, 1–32 (MLLRSRFLKVIHVRKQLSACSRFAIQTQTRCK), are a transit peptide targeting the mitochondrion. S-adenosyl-L-methionine is bound by residues R68, G130, D153, and M196. E197, E200, and H201 together coordinate Mg(2+).

The protein belongs to the class I-like SAM-binding methyltransferase superfamily. UbiG/COQ3 family. As to quaternary structure, component of a multi-subunit COQ enzyme complex, composed of at least COQ3, COQ4, COQ5, COQ6, COQ7 and COQ9. Interacts directly with COQ4. Mg(2+) is required as a cofactor.

Its subcellular location is the mitochondrion inner membrane. The catalysed reaction is 3,4-dihydroxy-5-(all-trans-hexaprenyl)benzoate + S-adenosyl-L-methionine = 4-hydroxy-3-methoxy-5-(all-trans-hexaprenyl)benzoate + S-adenosyl-L-homocysteine + H(+). It carries out the reaction a 3-demethylubiquinone + S-adenosyl-L-methionine = a ubiquinone + S-adenosyl-L-homocysteine. The enzyme catalyses 3-demethylubiquinol-6 + S-adenosyl-L-methionine = ubiquinol-6 + S-adenosyl-L-homocysteine + H(+). It functions in the pathway cofactor biosynthesis; ubiquinone biosynthesis. Its activity is regulated as follows. Regulated in response to catabolite repression. In terms of biological role, O-methyltransferase required for two non-consecutive steps during ubiquinone biosynthesis. Catalyzes the 2 O-methylation of 3,4-dihydroxy-5-(all-trans-hexaprenyl)benzoic acid into 4-hydroxy-3-methoxy-5-(all-trans-hexaprenyl)benzoic acid. Also catalyzes the last step of ubiquinone biosynthesis by mediating methylation of 3-demethylubiquinone into ubiquinone. Also able to mediate the methylation of 3-demethylubiquinol-6 into ubiquinol-6. The sequence is that of Ubiquinone biosynthesis O-methyltransferase, mitochondrial from Saccharomyces cerevisiae (strain ATCC 204508 / S288c) (Baker's yeast).